Here is a 608-residue protein sequence, read N- to C-terminus: Centromere DNA-binding protein complex CBF3 subunit B (608 aa).

Residues 14-42 (CSVCTRRKVKCDRMIPCGNCRKRGQDSEC) constitute a DNA-binding region (zn(2)-C6 fungal-type). A Phosphoserine modification is found at Ser575.

In terms of assembly, component of the CBF3 copmplex, which is formed of CBF3A/CBF2, CBF3B/CEP3, CBF3C/CTF13 and CBF3D.

It is found in the nucleus. It localises to the chromosome. Its subcellular location is the centromere. In terms of biological role, acts as a component of the centromere DNA-binding protein complex CBF3, which is essential for chromosome segregation and movement of centromeres along microtubules. CBF3 is required for the recruitment of other kinetochore complexes to CEN DNA. It plays a role in the attachment of chromosomes to the spindle and binds selectively to a highly conserved DNA sequence called CDEIII, found in centromers and in several promoters. The polypeptide is Centromere DNA-binding protein complex CBF3 subunit B (CEP3) (Saccharomyces cerevisiae (strain ATCC 204508 / S288c) (Baker's yeast)).